The primary structure comprises 221 residues: Probable N-acetyl-alpha-D-glucosaminyl L-malate deacetylase 2 (221 aa).

Positions 11, 14, and 125 each coordinate Zn(2+).

It belongs to the PIGL family. It depends on Zn(2+) as a cofactor.

It carries out the reaction (S)-malyl N-acetyl-alpha-D-glucosaminide + H2O = (S)-malyl alpha-D-glucosaminide + acetate. Functionally, involved in bacillithiol (BSH) biosynthesis. Catalyzes the second step of the pathway, the deacetylation of N-acetylglucosaminylmalate (GlcNAc-Mal) to glucosamine malate (GlcN-Mal). The polypeptide is Probable N-acetyl-alpha-D-glucosaminyl L-malate deacetylase 2 (Bacillus subtilis (strain 168)).